The following is a 310-amino-acid chain: tRNA-cytidine(32) 2-sulfurtransferase (310 aa).

The PP-loop motif signature appears at 48 to 53 (SGGKDS). [4Fe-4S] cluster contacts are provided by Cys123, Cys126, and Cys214.

Belongs to the TtcA family. Homodimer. The cofactor is Mg(2+). It depends on [4Fe-4S] cluster as a cofactor.

It localises to the cytoplasm. It carries out the reaction cytidine(32) in tRNA + S-sulfanyl-L-cysteinyl-[cysteine desulfurase] + AH2 + ATP = 2-thiocytidine(32) in tRNA + L-cysteinyl-[cysteine desulfurase] + A + AMP + diphosphate + H(+). The protein operates within tRNA modification. Catalyzes the ATP-dependent 2-thiolation of cytidine in position 32 of tRNA, to form 2-thiocytidine (s(2)C32). The sulfur atoms are provided by the cysteine/cysteine desulfurase (IscS) system. In Vibrio vulnificus (strain YJ016), this protein is tRNA-cytidine(32) 2-sulfurtransferase.